The sequence spans 265 residues: MKTTTMSQLRQWKQEKRKFATLTAYDASFAQLFAEQGIQVLLVGDSLGMTLQGFDSTLPVTVADVAYHTRAVRRGAPHCLLLADMPFMSYATPELAFTHAAELMRAGANMVKLEGGSWLCDTIRMLAERAVPVCGHLGLTPQSVNIFGGYKVQGREEVAANQLLQDAIALEQAGAQLLVLECVPVELAQRVTEELTIPVIGIGAGNVTDGQILVMHDALGITGGHTPKFSKNFLAHSAGDIRAAIKLYIEEVEGGIYPAEEHTFQ.

Residues D45 and D84 each coordinate Mg(2+). 3-methyl-2-oxobutanoate-binding positions include 45–46 (DS), D84, and K112. E114 contributes to the Mg(2+) binding site. The active-site Proton acceptor is the E181.

Belongs to the PanB family. In terms of assembly, homodecamer; pentamer of dimers. It depends on Mg(2+) as a cofactor.

Its subcellular location is the cytoplasm. The enzyme catalyses 3-methyl-2-oxobutanoate + (6R)-5,10-methylene-5,6,7,8-tetrahydrofolate + H2O = 2-dehydropantoate + (6S)-5,6,7,8-tetrahydrofolate. The protein operates within cofactor biosynthesis; (R)-pantothenate biosynthesis; (R)-pantoate from 3-methyl-2-oxobutanoate: step 1/2. In terms of biological role, catalyzes the reversible reaction in which hydroxymethyl group from 5,10-methylenetetrahydrofolate is transferred onto alpha-ketoisovalerate to form ketopantoate. This Yersinia pseudotuberculosis serotype IB (strain PB1/+) protein is 3-methyl-2-oxobutanoate hydroxymethyltransferase.